Consider the following 91-residue polypeptide: Virion membrane protein A14 homolog (91 aa).

Topologically, residues 1–12 are intravirion; sequence MDPLGFFRNRPS. A helical membrane pass occupies residues 13-33; the sequence is YVVVFGIILLIVACICAYIEL. Residues 34–46 are Virion surface-facing; the sequence is SKSGKPADSALRS. The helical transmembrane segment at 47-67 threads the bilayer; sequence ISIISFILAILLLLGIILFSG. Over 68–91 the chain is Intravirion; sequence YNRYCTGNVVDESRYATSPGTEIQ.

This sequence belongs to the chordopoxvirinae A14 family. In terms of assembly, homodimer; disulfide-linked. Interacts with A17. Post-translationally, phosphorylated by viral F10 kinase, phosphorylation state is regulated by H1 phosphatase.

The protein localises to the virion membrane. In terms of biological role, envelope protein which is a major component of the mature virion (MV) membrane. Essential for membrane biogenesis. Is required, together with A17, to form bona fide crescents, which can progress to form the immature virion (IV) membrane. A14 and A17 form a lattice that is stabilized by disulfide bonds and serves as an anchor within the viral membrane to which several other proteins important in virion structure and morphogenesis attach. This Fowlpox virus (strain NVSL) (FPV) protein is Virion membrane protein A14 homolog.